We begin with the raw amino-acid sequence, 180 residues long: Ribosome maturation factor RimM (180 aa).

Residues 99–172 (EDEFYQVDLI…FLVVDPVAAG (74 aa)) enclose the PRC barrel domain.

It belongs to the RimM family. In terms of assembly, binds ribosomal protein uS19.

The protein localises to the cytoplasm. In terms of biological role, an accessory protein needed during the final step in the assembly of 30S ribosomal subunit, possibly for assembly of the head region. Essential for efficient processing of 16S rRNA. May be needed both before and after RbfA during the maturation of 16S rRNA. It has affinity for free ribosomal 30S subunits but not for 70S ribosomes. In Bartonella henselae (strain ATCC 49882 / DSM 28221 / CCUG 30454 / Houston 1) (Rochalimaea henselae), this protein is Ribosome maturation factor RimM.